A 223-amino-acid polypeptide reads, in one-letter code: Probable iron-sulfur cluster repair protein HI_1677 (223 aa).

It belongs to the RIC family.

It is found in the cytoplasm. In terms of biological role, di-iron-containing protein involved in the repair of iron-sulfur clusters. This is Probable iron-sulfur cluster repair protein HI_1677 from Haemophilus influenzae (strain ATCC 51907 / DSM 11121 / KW20 / Rd).